The following is a 535-amino-acid chain: Probable glucomannan 4-beta-mannosyltransferase 14 (535 aa).

A helical transmembrane segment spans residues Gln-42 to Val-62. Asp-131 is an active-site residue. Residues Asp-193 and Asp-195 each contribute to the substrate site. Asp-287 is an active-site residue. The next 4 membrane-spanning stretches (helical) occupy residues Ile-366 to Phe-386, Ile-403 to Leu-423, Ile-482 to Tyr-502, and Leu-503 to Gly-523.

The protein belongs to the glycosyltransferase 2 family. Plant cellulose synthase-like A subfamily.

The protein resides in the golgi apparatus membrane. The catalysed reaction is GDP-mannose + (glucomannan)n = GDP + (glucomannan)n+1.. Probable mannan synthase which consists of a 4-beta-mannosyltransferase activity on mannan using GDP-mannose. The beta-1,4-mannan product is the backbone for galactomannan synthesis by galactomannan galactosyltransferase. Galactomannan is a noncellulosic polysaccharides of plant cell wall. The protein is Probable glucomannan 4-beta-mannosyltransferase 14 of Arabidopsis thaliana (Mouse-ear cress).